Here is a 260-residue protein sequence, read N- to C-terminus: Malonyl-[acyl-carrier protein] O-methyltransferase (260 aa).

It belongs to the methyltransferase superfamily.

It catalyses the reaction malonyl-[ACP] + S-adenosyl-L-methionine = malonyl-[ACP] methyl ester + S-adenosyl-L-homocysteine. The protein operates within cofactor biosynthesis; biotin biosynthesis. Its function is as follows. Converts the free carboxyl group of a malonyl-thioester to its methyl ester by transfer of a methyl group from S-adenosyl-L-methionine (SAM). It allows to synthesize pimeloyl-ACP via the fatty acid synthetic pathway. This is Malonyl-[acyl-carrier protein] O-methyltransferase from Haemophilus influenzae (strain ATCC 51907 / DSM 11121 / KW20 / Rd).